The following is a 447-amino-acid chain: UDP-N-acetylmuramate--L-alanine ligase (447 aa).

115–121 contributes to the ATP binding site; it reads GAHGKTS.

The protein belongs to the MurCDEF family.

The protein resides in the cytoplasm. The catalysed reaction is UDP-N-acetyl-alpha-D-muramate + L-alanine + ATP = UDP-N-acetyl-alpha-D-muramoyl-L-alanine + ADP + phosphate + H(+). It functions in the pathway cell wall biogenesis; peptidoglycan biosynthesis. Its function is as follows. Cell wall formation. In Streptococcus thermophilus (strain CNRZ 1066), this protein is UDP-N-acetylmuramate--L-alanine ligase.